The primary structure comprises 695 residues: Biosynthetic arginine decarboxylase 1 (695 aa).

At K141 the chain carries N6-(pyridoxal phosphate)lysine. Residue L332–Y342 coordinates substrate.

Belongs to the Orn/Lys/Arg decarboxylase class-II family. SpeA subfamily. The cofactor is Mg(2+). Pyridoxal 5'-phosphate is required as a cofactor.

It catalyses the reaction L-arginine + H(+) = agmatine + CO2. Catalyzes the biosynthesis of agmatine from arginine. The polypeptide is Biosynthetic arginine decarboxylase 1 (speA1) (Synechocystis sp. (strain ATCC 27184 / PCC 6803 / Kazusa)).